The primary structure comprises 349 residues: Phosphate acyltransferase (349 aa).

It belongs to the PlsX family. In terms of assembly, homodimer. Probably interacts with PlsY.

It is found in the cytoplasm. It carries out the reaction a fatty acyl-[ACP] + phosphate = an acyl phosphate + holo-[ACP]. Its pathway is lipid metabolism; phospholipid metabolism. Its function is as follows. Catalyzes the reversible formation of acyl-phosphate (acyl-PO(4)) from acyl-[acyl-carrier-protein] (acyl-ACP). This enzyme utilizes acyl-ACP as fatty acyl donor, but not acyl-CoA. This chain is Phosphate acyltransferase, found in Rhodopseudomonas palustris (strain BisA53).